A 231-amino-acid chain; its full sequence is F-box protein SKIP8 (231 aa).

Residues 1–24 form a disordered region; it reads MPSTPLANGGTPPMGGGERTTVTT. One can recognise an F-box domain in the interval 34–80; it reads VSMMEQLVPEITTHALSYLDYPSLCRLSMTNSLMRKAANDDNAWKAL.

Part of a SCF (ASK-cullin-F-box) protein ligase complex. Interacts with SKP1A/ASK1.

It participates in protein modification; protein ubiquitination. Its function is as follows. Component of SCF(ASK-cullin-F-box) E3 ubiquitin ligase complexes, which may mediate the ubiquitination and subsequent proteasomal degradation of target proteins. This is F-box protein SKIP8 (SKIP8) from Arabidopsis thaliana (Mouse-ear cress).